The chain runs to 67 residues: Andropin (67 aa).

An N-terminal signal peptide occupies residues 1 to 19 (MKYFLVLVVLTLILAISVG).

This sequence belongs to the andropin family. Ejaculatory duct of adult males.

The protein resides in the secreted. Male-specific peptide with moderate activity against Gram-positive bacteria. The polypeptide is Andropin (Anp) (Drosophila orena (Fruit fly)).